A 395-amino-acid chain; its full sequence is D-alanine--D-alanine ligase (395 aa).

The ATP-grasp domain maps to 172-391 (KVVLGAAGIP…YTELITRLIE (220 aa)). 204-266 (DAGLTYPLFI…EQGIDGREIE (63 aa)) contacts ATP. Mg(2+) is bound by residues D345, E358, and N360.

Belongs to the D-alanine--D-alanine ligase family. Mg(2+) serves as cofactor. Mn(2+) is required as a cofactor.

It localises to the cytoplasm. The enzyme catalyses 2 D-alanine + ATP = D-alanyl-D-alanine + ADP + phosphate + H(+). It participates in cell wall biogenesis; peptidoglycan biosynthesis. Cell wall formation. The chain is D-alanine--D-alanine ligase from Bifidobacterium longum subsp. infantis (strain ATCC 15697 / DSM 20088 / JCM 1222 / NCTC 11817 / S12).